Reading from the N-terminus, the 303-residue chain is Probable cell division protein WhiA (303 aa).

Positions 272-303 form a DNA-binding region, H-T-H motif; that stretch reads SIQQLADSLSTPLTKSGVNHRLRKINKIADEL.

The protein belongs to the WhiA family.

Its function is as follows. Involved in cell division and chromosome segregation. This Streptococcus pneumoniae serotype 4 (strain ATCC BAA-334 / TIGR4) protein is Probable cell division protein WhiA.